The primary structure comprises 522 residues: Peptide chain release factor 3 (522 aa).

In terms of domain architecture, tr-type G spans 10-277 (ASRKTFAIIS…TFVDFAPSPS (268 aa)). Residues 19 to 26 (SHPDAGKT), 87 to 91 (DTPGH), and 141 to 144 (NKMD) contribute to the GTP site.

Belongs to the TRAFAC class translation factor GTPase superfamily. Classic translation factor GTPase family. PrfC subfamily.

It localises to the cytoplasm. Increases the formation of ribosomal termination complexes and stimulates activities of RF-1 and RF-2. It binds guanine nucleotides and has strong preference for UGA stop codons. It may interact directly with the ribosome. The stimulation of RF-1 and RF-2 is significantly reduced by GTP and GDP, but not by GMP. The protein is Peptide chain release factor 3 of Listeria monocytogenes serotype 4b (strain F2365).